The following is a 73-amino-acid chain: Disintegrin cerastin (73 aa).

Residues 1–73 (EAGEECDCGT…ADCPRNGLYG (73 aa)) form the Disintegrin domain. 6 disulfides stabilise this stretch: cysteine 6/cysteine 21, cysteine 8/cysteine 16, cysteine 15/cysteine 38, cysteine 29/cysteine 35, cysteine 34/cysteine 59, and cysteine 47/cysteine 66. The Cell attachment site signature appears at 51–53 (RGD).

This sequence belongs to the venom metalloproteinase (M12B) family. P-II subfamily. P-IIa sub-subfamily. In terms of assembly, monomer (disintegrin). As to expression, expressed by the venom gland.

The protein resides in the secreted. Its function is as follows. Inhibits fibrinogen interaction with platelets. Acts by binding to alpha-IIb/beta-3 (ITGA2B/ITGB3) on the platelet surface and inhibits aggregation induced by ADP, thrombin, platelet-activating factor and collagen. The sequence is that of Disintegrin cerastin from Crotalus cerastes cerastes (Mojave desert sidewinder).